Consider the following 481-residue polypeptide: Protein JASON (481 aa).

The segment at 226–250 (ECDLDQSNSSNSSENGSSRKPEMGG) is disordered. Residues 232–241 (SNSSNSSENG) are compositionally biased toward low complexity.

Functionally, required for normal spindle orientation at male meiosis II and normal formation of tetrad of microspores. Acts as a positive regulator of PS1 in male sporogenesis. Not involved in female meiosis. The protein is Protein JASON of Arabidopsis thaliana (Mouse-ear cress).